Reading from the N-terminus, the 179-residue chain is Acireductone dioxygenase (179 aa).

H85, H87, E91, and H132 together coordinate Fe(2+). The Ni(2+) site is built by H85, H87, E91, and H132.

This sequence belongs to the acireductone dioxygenase (ARD) family. Requires Fe(2+) as cofactor. Ni(2+) is required as a cofactor.

It is found in the cytoplasm. The protein localises to the nucleus. The catalysed reaction is 1,2-dihydroxy-5-(methylsulfanyl)pent-1-en-3-one + O2 = 4-methylsulfanyl-2-oxobutanoate + formate + 2 H(+). It carries out the reaction 1,2-dihydroxy-5-(methylsulfanyl)pent-1-en-3-one + O2 = 3-(methylsulfanyl)propanoate + CO + formate + 2 H(+). Its pathway is amino-acid biosynthesis; L-methionine biosynthesis via salvage pathway; L-methionine from S-methyl-5-thio-alpha-D-ribose 1-phosphate: step 5/6. Functionally, catalyzes 2 different reactions between oxygen and the acireductone 1,2-dihydroxy-3-keto-5-methylthiopentene (DHK-MTPene) depending upon the metal bound in the active site. Fe-containing acireductone dioxygenase (Fe-ARD) produces formate and 2-keto-4-methylthiobutyrate (KMTB), the alpha-ketoacid precursor of methionine in the methionine recycle pathway. Ni-containing acireductone dioxygenase (Ni-ARD) produces methylthiopropionate, carbon monoxide and formate, and does not lie on the methionine recycle pathway. In Saccharomyces cerevisiae (strain ATCC 204508 / S288c) (Baker's yeast), this protein is Acireductone dioxygenase.